A 141-amino-acid polypeptide reads, in one-letter code: MLNAEDKKLIQQAWEKAASHQQEFGAEALVRMFTAYPQTKTYFPHFDLSPGSDQIRGHGKKVLGALSNAVKNVDNLSQAMSELSNLHAYNLRVDPVNFKLLSQCIEVVLAVHMGKDYTPEVHAAFDKFLSAVSAVLAEKYR.

Residues methionine 1 to arginine 141 enclose the Globin domain. Residues histidine 58 and histidine 87 each contribute to the heme b site.

It belongs to the globin family. As to quaternary structure, heterotetramer of two alpha-D chains and two beta chains. Red blood cells.

Functionally, involved in oxygen transport from the lung to the various peripheral tissues. The sequence is that of Hemoglobin subunit alpha-D (HBAD) from Phasianus colchicus colchicus (Black-necked pheasant).